The primary structure comprises 126 residues: Large ribosomal subunit protein bL20 (126 aa).

Residues 1-15 (MARVKRAVNAQKKRR) are compositionally biased toward basic residues. Residues 1-20 (MARVKRAVNAQKKRRTTLER) form a disordered region.

It belongs to the bacterial ribosomal protein bL20 family.

Functionally, binds directly to 23S ribosomal RNA and is necessary for the in vitro assembly process of the 50S ribosomal subunit. It is not involved in the protein synthesizing functions of that subunit. In Beutenbergia cavernae (strain ATCC BAA-8 / DSM 12333 / CCUG 43141 / JCM 11478 / NBRC 16432 / NCIMB 13614 / HKI 0122), this protein is Large ribosomal subunit protein bL20.